A 225-amino-acid chain; its full sequence is 2-C-methyl-D-erythritol 4-phosphate cytidylyltransferase (225 aa).

It belongs to the IspD/TarI cytidylyltransferase family. IspD subfamily.

It catalyses the reaction 2-C-methyl-D-erythritol 4-phosphate + CTP + H(+) = 4-CDP-2-C-methyl-D-erythritol + diphosphate. Its pathway is isoprenoid biosynthesis; isopentenyl diphosphate biosynthesis via DXP pathway; isopentenyl diphosphate from 1-deoxy-D-xylulose 5-phosphate: step 2/6. Catalyzes the formation of 4-diphosphocytidyl-2-C-methyl-D-erythritol from CTP and 2-C-methyl-D-erythritol 4-phosphate (MEP). In Cereibacter sphaeroides (strain KD131 / KCTC 12085) (Rhodobacter sphaeroides), this protein is 2-C-methyl-D-erythritol 4-phosphate cytidylyltransferase.